Reading from the N-terminus, the 102-residue chain is Small ribosomal subunit protein uS10 (102 aa).

It belongs to the universal ribosomal protein uS10 family. In terms of assembly, part of the 30S ribosomal subunit.

Its function is as follows. Involved in the binding of tRNA to the ribosomes. This chain is Small ribosomal subunit protein uS10, found in Malacoplasma penetrans (strain HF-2) (Mycoplasma penetrans).